Here is a 1058-residue protein sequence, read N- to C-terminus: Carbamoyl phosphate synthase large chain (1058 aa).

The segment at Met1 to Glu401 is carboxyphosphate synthetic domain. ATP-binding residues include Arg129, Arg169, Gly175, Gly176, Arg208, Ile210, Glu215, Gly241, Ile242, His243, Gln284, and Glu298. In terms of domain architecture, ATP-grasp 1 spans Lys133–Val327. Residues Gln284, Glu298, and Asn300 each contribute to the Mg(2+) site. Residues Gln284, Glu298, and Asn300 each contribute to the Mn(2+) site. The tract at residues Ile402–Ser546 is oligomerization domain. A carbamoyl phosphate synthetic domain region spans residues Ile547 to Tyr929. One can recognise an ATP-grasp 2 domain in the interval Glu671–Leu861. Residues Arg707, Ser746, Ile748, Glu752, Gly777, Val778, His779, Ser780, Gln820, and Glu832 each coordinate ATP. Gln820, Glu832, and Asn834 together coordinate Mg(2+). 3 residues coordinate Mn(2+): Gln820, Glu832, and Asn834. The MGS-like domain maps to Leu930–Ile1058. The segment at Leu930 to Ile1058 is allosteric domain.

It belongs to the CarB family. In terms of assembly, composed of two chains; the small (or glutamine) chain promotes the hydrolysis of glutamine to ammonia, which is used by the large (or ammonia) chain to synthesize carbamoyl phosphate. Tetramer of heterodimers (alpha,beta)4. Requires Mg(2+) as cofactor. The cofactor is Mn(2+).

It catalyses the reaction hydrogencarbonate + L-glutamine + 2 ATP + H2O = carbamoyl phosphate + L-glutamate + 2 ADP + phosphate + 2 H(+). The catalysed reaction is hydrogencarbonate + NH4(+) + 2 ATP = carbamoyl phosphate + 2 ADP + phosphate + 2 H(+). Its pathway is amino-acid biosynthesis; L-arginine biosynthesis; carbamoyl phosphate from bicarbonate: step 1/1. It functions in the pathway pyrimidine metabolism; UMP biosynthesis via de novo pathway; (S)-dihydroorotate from bicarbonate: step 1/3. In terms of biological role, large subunit of the glutamine-dependent carbamoyl phosphate synthetase (CPSase). CPSase catalyzes the formation of carbamoyl phosphate from the ammonia moiety of glutamine, carbonate, and phosphate donated by ATP, constituting the first step of 2 biosynthetic pathways, one leading to arginine and/or urea and the other to pyrimidine nucleotides. The large subunit (synthetase) binds the substrates ammonia (free or transferred from glutamine from the small subunit), hydrogencarbonate and ATP and carries out an ATP-coupled ligase reaction, activating hydrogencarbonate by forming carboxy phosphate which reacts with ammonia to form carbamoyl phosphate. The protein is Carbamoyl phosphate synthase large chain of Streptococcus pneumoniae (strain ATCC BAA-255 / R6).